We begin with the raw amino-acid sequence, 916 residues long: Transmembrane channel-like protein 2-A (916 aa).

The span at 1–13 shows a compositional bias: basic and acidic residues; it reads MPKKSDTTRKLED. A disordered region spans residues 1 to 159; sequence MPKKSDTTRK…DEEDESMSEG (159 aa). Topologically, residues 1–271 are cytoplasmic; that stretch reads MPKKSDTTRK…IFLRWMYGMN (271 aa). The segment covering 14–26 has biased composition (acidic residues); it reads VGIEIDGDVDSAE. 2 stretches are compositionally biased toward basic residues: residues 31-45 and 62-72; these read SKGKGGKKAAGGKRG and KGRRAANKKKP. The segment covering 97–107 has biased composition (basic and acidic residues); sequence NVRERGDGDKK. A compositionally biased stretch (basic residues) spans 108–117; that stretch reads KSGKKGRRGG. Basic and acidic residues predominate over residues 118–138; that stretch reads KKNEKGKGKDSDKDSDKDEKK. Residues 145–157 are compositionally biased toward acidic residues; sequence DESDSDEEDESMS. A helical membrane pass occupies residues 272–292; it reads LVLFSLTFGLVVIPEVLMGLP. Residues 293 to 344 lie on the Extracellular side of the membrane; sequence YGSIPRKTVPREDQDTAMDYSVLTDFNGYCKYSVLFYGYYNNQRTIGFLKFR. Residues 345–365 form a helical membrane-spanning segment; sequence LPLSYLMVGIGTFGYSLMVVI. At 366–438 the chain is on the cytoplasmic side; that stretch reads RTMAKNADVG…ENIHLRRFLR (73 aa). Residues 439 to 459 traverse the membrane as a helical segment; it reads VLANFLITCTLGGSGYLIYFV. The Extracellular portion of the chain corresponds to 460–478; it reads VKRSQEFQNMDNLSWYEKN. A helical membrane pass occupies residues 479–499; sequence ELEIIMSLLGLVGPMLFETIA. Residues 500-516 lie on the Cytoplasmic side of the membrane; that stretch reads ELEEYHPRIALKWQLGR. The helical transmembrane segment at 517 to 537 threads the bilayer; the sequence is IFALFLGNLYTFLLALFDEVN. Over 538–649 the chain is Extracellular; the sequence is AKLEEEESIK…EFDISGNVLG (112 aa). A helical transmembrane segment spans residues 650–670; it reads LVFNQGMIWMGAFYAPGLVGI. Topologically, residues 671-704 are cytoplasmic; it reads NVLRLLSSMYYQCWAVMACNVPHERVFKASKSNN. Residues 705-725 traverse the membrane as a helical segment; the sequence is FYMGLLLLILFLSLLPVVYTI. The Extracellular segment spans residues 726-762; it reads MSLPPSFDCGPFSGKERMFDVVMETIDLDLPAFMGTL. A helical membrane pass occupies residues 763–783; sequence FGYVANPGLVISAVLLMVLAI. The Cytoplasmic segment spans residues 784-916; sequence YYLNSVSEAY…RGQGPPPRRQ (133 aa). The segment covering 804-818 has biased composition (basic and acidic residues); sequence MQMARDEEKNRRNNK. The interval 804–916 is disordered; sequence MQMARDEEKN…RGQGPPPRRQ (113 aa). A compositionally biased stretch (low complexity) spans 883 to 892; that stretch reads ARGPVTRAPG.

The protein belongs to the TMC family. Interacts (via N-terminus) with both isoforms CD1 and CD3 of PCDH15A (via cytoplasmic domain); this interaction is required for mechanotransduction of the hair cells and correct localization of PCDH15A in hair bundles of the hair cells. In terms of tissue distribution, in adults, expression is restricted to the hair cells of inner ear and lateral line organ. Expressed at higher levels in the larval inner ear than in the lateral-line neuromasts.

Its subcellular location is the cell membrane. It catalyses the reaction Ca(2+)(in) = Ca(2+)(out). Functionally, pore-forming subunit of the mechanotransducer (MET) non-selective cation channel complex located at tips of hair-cell stereocilia. Highly permeable to calcium and likely transports monovalent cations. The protein is Transmembrane channel-like protein 2-A of Danio rerio (Zebrafish).